A 353-amino-acid polypeptide reads, in one-letter code: tRNA U34 carboxymethyltransferase (353 aa).

Residues K101, W119, K124, G144, 166-168 (DPS), 207-208 (LE), M227, Y231, and R346 each bind carboxy-S-adenosyl-L-methionine.

It belongs to the class I-like SAM-binding methyltransferase superfamily. CmoB family. Homotetramer.

The enzyme catalyses carboxy-S-adenosyl-L-methionine + 5-hydroxyuridine(34) in tRNA = 5-carboxymethoxyuridine(34) in tRNA + S-adenosyl-L-homocysteine + H(+). Functionally, catalyzes carboxymethyl transfer from carboxy-S-adenosyl-L-methionine (Cx-SAM) to 5-hydroxyuridine (ho5U) to form 5-carboxymethoxyuridine (cmo5U) at position 34 in tRNAs. This chain is tRNA U34 carboxymethyltransferase, found in Psychrobacter sp. (strain PRwf-1).